We begin with the raw amino-acid sequence, 249 residues long: 2-C-methyl-D-erythritol 4-phosphate cytidylyltransferase (249 aa).

Belongs to the IspD/TarI cytidylyltransferase family. IspD subfamily.

It catalyses the reaction 2-C-methyl-D-erythritol 4-phosphate + CTP + H(+) = 4-CDP-2-C-methyl-D-erythritol + diphosphate. It functions in the pathway isoprenoid biosynthesis; isopentenyl diphosphate biosynthesis via DXP pathway; isopentenyl diphosphate from 1-deoxy-D-xylulose 5-phosphate: step 2/6. In terms of biological role, catalyzes the formation of 4-diphosphocytidyl-2-C-methyl-D-erythritol from CTP and 2-C-methyl-D-erythritol 4-phosphate (MEP). In Chromohalobacter salexigens (strain ATCC BAA-138 / DSM 3043 / CIP 106854 / NCIMB 13768 / 1H11), this protein is 2-C-methyl-D-erythritol 4-phosphate cytidylyltransferase.